The chain runs to 735 residues: Transcription initiation factor IIF subunit alpha (735 aa).

Disordered stretches follow at residues 1 to 68, 165 to 263, 297 to 323, 446 to 465, 471 to 606, and 631 to 674; these read MSRR…EYAE, EYKK…TANL, NEPE…AKRG, KAVA…NSEV, EEFA…HKEP, and PEGE…EETP. The span at 33–54 shows a compositional bias: low complexity; the sequence is RMRMGQNGSNSSSPGVPNGDNS. Basic and acidic residues-rich tracts occupy residues 59 to 68 and 165 to 174; these read VKKDDPEYAE and EYKKKAEQER. Over residues 175–219 the composition is skewed to polar residues; sequence STPNSGGMNKSGTVSLNNTVKDGSQTPTVDSVTKDNTANGVNSSI. Ser198 is modified (phosphoserine). Thr200 is subject to Phosphothreonine. Residues 220-238 are compositionally biased toward low complexity; the sequence is PTVTGSSVPPASPTTVSAV. A compositionally biased stretch (polar residues) spans 239–263; it reads ESNGLSNGSTSAANGLDGNASTANL. Acidic residues-rich tracts occupy residues 453 to 465 and 471 to 480; these read AMDE…NSEV and EEFADDEEAP. Residues 487-500 show a composition bias toward basic and acidic residues; it reads QENKESEQRIKKEM. Acidic residues predominate over residues 513-522; the sequence is APSENEEDEL. Ser515 is modified (phosphoserine). The segment covering 523–536 has biased composition (basic and acidic residues); sequence FGEKKIDEDGERIK. Phosphoserine is present on residues Ser560, Ser562, and Ser571. The span at 564-583 shows a compositional bias: basic and acidic residues; that stretch reads IENKENESPVKKEEDSDTLS. Residues 584–595 show a composition bias toward basic residues; the sequence is KSKRSSPKKQQK. Over residues 636-654 the composition is skewed to polar residues; sequence NPQTTKAVDSSNNASNTVP. A Phosphoserine modification is found at Ser655.

This sequence belongs to the TFIIF alpha subunit family. As to quaternary structure, TFIIF is composed of three different subunits: TFG1/RAP74, TFG2/RAP30 and TAF14. Phosphorylated on Ser and other residues by TAF1 and casein kinase II-like kinases.

The protein resides in the nucleus. Its function is as follows. TFIIF is a general transcription initiation factor that binds to RNA polymerase II. Its functions include the recruitment of RNA polymerase II to the promoter bound DNA-TBP-TFIIB complex, decreasing the affinity of RNA polymerase II for non-specific DNA, allowing for the subsequent recruitment of TFIIE and TFIIH, and facilitating RNA polymerase II elongation. The chain is Transcription initiation factor IIF subunit alpha (TFG1) from Saccharomyces cerevisiae (strain ATCC 204508 / S288c) (Baker's yeast).